The primary structure comprises 343 residues: Fanconi anemia group F protein (343 aa).

As to quaternary structure, belongs to the multisubunit FA complex composed of FANCA, FANCB, FANCC, FANCE, FANCF, FANCG, FANCL/PHF9 and FANCM. In complex with FANCA, FANCG and FANCL, but not with FANCC, nor FANCE, interacts with HES1; this interaction may be essential for the stability and nuclear localization of FA core complex proteins.

It localises to the nucleus. Its function is as follows. DNA repair protein that may operate in a postreplication repair or a cell cycle checkpoint function. May be implicated in interstrand DNA cross-link repair and in the maintenance of normal chromosome stability. The protein is Fanconi anemia group F protein of Mus musculus (Mouse).